A 461-amino-acid chain; its full sequence is MGKFQSKHAAAACKRRESPEGDSFVVPAYGSGRRGAEETDRRAGSGVEHRSRDKQELLNGDPKEGPFWDDKGSLEVVLPPEKSEGHEGQGQLFSTDDGEKAASREGPLRLSKKHLNIDALQCDVSVEEDNRQEWTFTLYDFDNSGKVTREDMSSLMHTIYEVVDASVNHSSGSSKTLRVKLTVSPEPSSKKECPLTGQDREPTRGRTEIELTDEPRVADRRLSAYSRKPNADPQPCSVRVPYCVDENTERRNHYLDLAGIENYTSKFGPGSPPEQARQEHHGRATHIPSRSRSQESDAHAIHHRRSQVLAEHVIPANEPATRALAAQPRIKGQEKQFLRSPKGPGKPLGTPGSGKPGKALSYCLQAVPLPQSAQDGHHLPQPPPQPPPQPYGHKRYRQKAREGHSPLKGHGQPTMVEHEVVRDLPPMLGPEGYVMPVVQRHEHHHHHEHHHHHHHHHFHPS.

The interval 1–106 (MGKFQSKHAA…DGEKAASREG (106 aa)) is disordered. Glycine 2 is lipidated: N-myristoyl glycine. 2 stretches are compositionally biased toward basic and acidic residues: residues 34–73 (RGAEETDRRAGSGVEHRSRDKQELLNGDPKEGPFWDDKGS) and 97–106 (DGEKAASREG). The segment at 121-186 (QCDVSVEEDN…LRVKLTVSPE (66 aa)) is interaction with DVL1, DVL2 and DVL3. Positions 127-162 (EEDNRQEWTFTLYDFDNSGKVTREDMSSLMHTIYEV) constitute an EF-hand domain. 5 residues coordinate Ca(2+): aspartate 140, aspartate 142, serine 144, lysine 146, and aspartate 151. Disordered regions lie at residues 176-205 (TLRVKLTVSPEPSSKKECPLTGQDREPTRG), 263-302 (YTSKFGPGSPPEQARQEHHGRATHIPSRSRSQESDAHAIH), 321-359 (TRALAAQPRIKGQEKQFLRSPKGPGKPLGTPGSGKPGKA), 372-414 (SAQD…GQPT), and 441-461 (HEHHHHHEHHHHHHHHHFHPS). A compositionally biased stretch (basic and acidic residues) spans 188 to 205 (SSKKECPLTGQDREPTRG). Residues 307–396 (QVLAEHVIPA…PPQPYGHKRY (90 aa)) are interaction with TGFA. Residues 341-350 (PKGPGKPLGT) are compositionally biased toward low complexity. Residues 380 to 390 (PQPPPQPPPQP) show a composition bias toward pro residues.

The protein belongs to the NKD family. Interacts with RNF25, TGFA (via cytoplasmic domain), and PPP2R3A. Interacts with DVL1, DVL2 and DVL3. Post-translationally, ubiquitinated, leading to rapid proteasomal degradation. Interaction with TGFA interferes with RNF25 binding and protects against ubiquitination mediated by RNF25. Expressed in the cecum, colon, esophagus, ileum, jejunum, skin and stomach.

The protein resides in the cell membrane. Its subcellular location is the cytoplasm. It is found in the cytoplasmic vesicle. Its function is as follows. Cell autonomous antagonist of the canonical Wnt signaling pathway. May activate a second Wnt signaling pathway that controls planar cell polarity. Required for processing of TGFA and for targeting of TGFA to the basolateral membrane of polarized epithelial cells. This chain is Protein naked cuticle homolog 2 (Nkd2), found in Mus musculus (Mouse).